The chain runs to 556 residues: Formate--tetrahydrofolate ligase (556 aa).

ATP is bound at residue 65-72; sequence TPAGEGKT.

This sequence belongs to the formate--tetrahydrofolate ligase family.

The catalysed reaction is (6S)-5,6,7,8-tetrahydrofolate + formate + ATP = (6R)-10-formyltetrahydrofolate + ADP + phosphate. Its pathway is one-carbon metabolism; tetrahydrofolate interconversion. The protein is Formate--tetrahydrofolate ligase of Hyphomonas neptunium (strain ATCC 15444).